The following is a 617-amino-acid chain: Acyl-CoA dehydrogenase family member 11 (617 aa).

Residues 1 to 47 are disordered; the sequence is MHRIGNAVRMASSSSANATITARHTQYSHAKTGGFSQTGPTLHNPYK. Over residues 11-22 the composition is skewed to low complexity; sequence ASSSSANATITA. Polar residues predominate over residues 23–41; sequence RHTQYSHAKTGGFSQTGPT. FAD is bound by residues 206–215 and 241–243; these read QWMTEKKGGS and FSS. Residue S215 coordinates substrate. Residues S267 and R334 each contribute to the substrate site. FAD is bound by residues R359, 366–369, E437, G441, and 464–466; these read QSKW and EGT.

It belongs to the acyl-CoA dehydrogenase family. Homotetramer; dimer of dimers.

Functionally, promotes adaption to elevated temperatures by regulating expression of the lipid desaturase, fat-7. Binds selectively and with high affinity to fatty acids with chain lengths from C10 to C12 and prevents them from activating fat-7 expression mediated by the nuclear hormone receptor nhr-49, leading to low levels of membrane lipid desaturation and membrane fluidity for adaption to heat. The polypeptide is Acyl-CoA dehydrogenase family member 11 (Caenorhabditis elegans).